Reading from the N-terminus, the 84-residue chain is MTDQIRTLQGRVVSDKMEKSMVVAIERVVKHPIYGKFIRRTTKLHVHDENNECGIGDVVEIRECRPLSKTKSWTLVRVVEKAIL.

This sequence belongs to the universal ribosomal protein uS17 family. Part of the 30S ribosomal subunit.

Its function is as follows. One of the primary rRNA binding proteins, it binds specifically to the 5'-end of 16S ribosomal RNA. The sequence is that of Small ribosomal subunit protein uS17 from Yersinia enterocolitica serotype O:8 / biotype 1B (strain NCTC 13174 / 8081).